Consider the following 733-residue polypeptide: Hexamerin (733 aa).

The signal sequence occupies residues 1–17; the sequence is MKTALVLILATATLAVA. Residues Asn-199, Asn-234, and Asn-431 are each glycosylated (N-linked (GlcNAc...) asparagine).

Belongs to the hemocyanin family. As to quaternary structure, homohexamer.

Its subcellular location is the secreted. The protein localises to the extracellular space. Functionally, larval storage protein (LSP) which may serve as a store of amino acids for synthesis of adult proteins. The polypeptide is Hexamerin (Blaberus discoidalis (Tropical cockroach)).